Reading from the N-terminus, the 278-residue chain is MRVITTIAELRTARAALQGTTGLVPTMGYLHEGHLSLVRRARAENDHVITTIFVNPTQFGPSEDLTRYPRDLPRDLALLEAEKVDLVFAPDVSEMYPPGFGTFIDVGPIAAPLEGAARPGHFRGVATVVCKLFAITSPHRAYFGQKDAQQTLVIRRMTLDLNLPVEIVVCPIVREPDGLAMSSRNVYLNPEERRAATVLFRALRAVQERFAAGERNGDALRAAMRAVIDAEPLARADYVSVADLDDLHELETVTNRALASLAVRIGTTRLIDNCVLEA.

27 to 34 (MGYLHEGH) contributes to the ATP binding site. Histidine 34 (proton donor) is an active-site residue. (R)-pantoate is bound at residue glutamine 58. Residue glutamine 58 participates in beta-alanine binding. 144–147 (GQKD) lines the ATP pocket. Glutamine 150 contributes to the (R)-pantoate binding site. ATP is bound by residues valine 173 and 181 to 184 (MSSR).

This sequence belongs to the pantothenate synthetase family. In terms of assembly, homodimer.

Its subcellular location is the cytoplasm. The catalysed reaction is (R)-pantoate + beta-alanine + ATP = (R)-pantothenate + AMP + diphosphate + H(+). It functions in the pathway cofactor biosynthesis; (R)-pantothenate biosynthesis; (R)-pantothenate from (R)-pantoate and beta-alanine: step 1/1. In terms of biological role, catalyzes the condensation of pantoate with beta-alanine in an ATP-dependent reaction via a pantoyl-adenylate intermediate. This Roseiflexus sp. (strain RS-1) protein is Pantothenate synthetase.